A 210-amino-acid chain; its full sequence is Large ribosomal subunit protein uL3 (210 aa).

The interval 133–152 is disordered; it reads ATHGNSLSHRVHGSTGQNQT. Glutamine 151 is modified (N5-methylglutamine).

This sequence belongs to the universal ribosomal protein uL3 family. Part of the 50S ribosomal subunit. Forms a cluster with proteins L14 and L19. In terms of processing, methylated by PrmB.

Functionally, one of the primary rRNA binding proteins, it binds directly near the 3'-end of the 23S rRNA, where it nucleates assembly of the 50S subunit. In Francisella tularensis subsp. holarctica (strain FTNF002-00 / FTA), this protein is Large ribosomal subunit protein uL3.